Reading from the N-terminus, the 245-residue chain is 1-(5-phosphoribosyl)-5-[(5-phosphoribosylamino)methylideneamino] imidazole-4-carboxamide isomerase (245 aa).

Asp-11 (proton acceptor) is an active-site residue. The Proton donor role is filled by Asp-132.

It belongs to the HisA/HisF family.

It is found in the cytoplasm. It carries out the reaction 1-(5-phospho-beta-D-ribosyl)-5-[(5-phospho-beta-D-ribosylamino)methylideneamino]imidazole-4-carboxamide = 5-[(5-phospho-1-deoxy-D-ribulos-1-ylimino)methylamino]-1-(5-phospho-beta-D-ribosyl)imidazole-4-carboxamide. It participates in amino-acid biosynthesis; L-histidine biosynthesis; L-histidine from 5-phospho-alpha-D-ribose 1-diphosphate: step 4/9. The sequence is that of 1-(5-phosphoribosyl)-5-[(5-phosphoribosylamino)methylideneamino] imidazole-4-carboxamide isomerase from Bacillus licheniformis (strain ATCC 14580 / DSM 13 / JCM 2505 / CCUG 7422 / NBRC 12200 / NCIMB 9375 / NCTC 10341 / NRRL NRS-1264 / Gibson 46).